The primary structure comprises 644 residues: Exoribonuclease 2 (644 aa).

One can recognise an RNB domain in the interval 189–516 (REDLTALNFV…NHRLLKAMIT (328 aa)). In terms of domain architecture, S1 motif spans 561-643 (DTRFTAEIID…ETRNVIARPV (83 aa)).

The protein belongs to the RNR ribonuclease family. RNase II subfamily.

Its subcellular location is the cytoplasm. The catalysed reaction is Exonucleolytic cleavage in the 3'- to 5'-direction to yield nucleoside 5'-phosphates.. Functionally, involved in mRNA degradation. Hydrolyzes single-stranded polyribonucleotides processively in the 3' to 5' direction. The sequence is that of Exoribonuclease 2 from Yersinia pestis bv. Antiqua (strain Antiqua).